We begin with the raw amino-acid sequence, 380 residues long: Epoxyqueuosine reductase (380 aa).

The active-site Proton donor is the Asp-134. The 4Fe-4S ferredoxin-type 1 domain maps to 179 to 208; it reads PPDQPIEDQCGSCTKCIDICPTGALIQGGQ. 8 residues coordinate [4Fe-4S] cluster: Cys-188, Cys-191, Cys-194, Cys-198, Cys-214, Cys-240, Cys-243, and Cys-247. The 4Fe-4S ferredoxin-type 2 domain occupies 226-258; it reads PEEYRDKIGNRIYGCDTCQTVCPKNKGMDFHNH.

The protein belongs to the QueG family. In terms of assembly, monomer. Cob(II)alamin serves as cofactor. It depends on [4Fe-4S] cluster as a cofactor.

The protein localises to the cytoplasm. It carries out the reaction epoxyqueuosine(34) in tRNA + AH2 = queuosine(34) in tRNA + A + H2O. It participates in tRNA modification; tRNA-queuosine biosynthesis. Its function is as follows. Catalyzes the conversion of epoxyqueuosine (oQ) to queuosine (Q), which is a hypermodified base found in the wobble positions of tRNA(Asp), tRNA(Asn), tRNA(His) and tRNA(Tyr). This Bacillus anthracis protein is Epoxyqueuosine reductase.